The primary structure comprises 332 residues: Glycine betaine-binding periplasmic protein OusX (332 aa).

Residues 1 to 21 (MRNISMATLALTTVLSTGLFA) form the signal peptide.

In terms of assembly, the complex is composed of two ATP-binding proteins (OusV), two transmembrane proteins (OusW) and a solute-binding protein (OusX).

It is found in the periplasm. Functionally, part of the OusB ABC transporter complex involved in glycine betaine and choline uptake. Binds glycine betaine. The polypeptide is Glycine betaine-binding periplasmic protein OusX (Dickeya dadantii (strain 3937) (Erwinia chrysanthemi (strain 3937))).